Here is a 205-residue protein sequence, read N- to C-terminus: Large ribosomal subunit protein uL3c (205 aa).

Positions 130–150 (RGPMSHGSKNHRQPGSIGAGT) are disordered.

The protein belongs to the universal ribosomal protein uL3 family. As to quaternary structure, part of the 50S ribosomal subunit.

Its subcellular location is the plastid. The protein resides in the chloroplast. One of the primary rRNA binding proteins, it binds directly near the 3'-end of the 23S rRNA, where it nucleates assembly of the 50S subunit. The sequence is that of Large ribosomal subunit protein uL3c (rpl3) from Gracilaria tenuistipitata var. liui (Red alga).